The sequence spans 487 residues: N-succinylglutamate 5-semialdehyde dehydrogenase (487 aa).

221–226 (GSSDTG) contacts NAD(+). Active-site residues include Glu244 and Cys278.

This sequence belongs to the aldehyde dehydrogenase family. AstD subfamily.

It carries out the reaction N-succinyl-L-glutamate 5-semialdehyde + NAD(+) + H2O = N-succinyl-L-glutamate + NADH + 2 H(+). Its pathway is amino-acid degradation; L-arginine degradation via AST pathway; L-glutamate and succinate from L-arginine: step 4/5. Its function is as follows. Catalyzes the NAD-dependent reduction of succinylglutamate semialdehyde into succinylglutamate. The protein is N-succinylglutamate 5-semialdehyde dehydrogenase of Burkholderia cenocepacia (strain HI2424).